Here is a 243-residue protein sequence, read N- to C-terminus: Peptidyl-tRNA hydrolase (243 aa).

Tyrosine 14 provides a ligand contact to tRNA. Histidine 19 serves as the catalytic Proton acceptor. TRNA is bound by residues phenylalanine 64, asparagine 66, and asparagine 112. A disordered region spans residues 184–225 (AAQTRPAEKAKPLATAKPKEGEARTSGGSVAEVGAPPPSPTG). Basic and acidic residues predominate over residues 189–206 (PAEKAKPLATAKPKEGEA).

Belongs to the PTH family. As to quaternary structure, monomer.

The protein localises to the cytoplasm. It catalyses the reaction an N-acyl-L-alpha-aminoacyl-tRNA + H2O = an N-acyl-L-amino acid + a tRNA + H(+). Its function is as follows. Hydrolyzes ribosome-free peptidyl-tRNAs (with 1 or more amino acids incorporated), which drop off the ribosome during protein synthesis, or as a result of ribosome stalling. In terms of biological role, catalyzes the release of premature peptidyl moieties from peptidyl-tRNA molecules trapped in stalled 50S ribosomal subunits, and thus maintains levels of free tRNAs and 50S ribosomes. The chain is Peptidyl-tRNA hydrolase from Rhodospirillum rubrum (strain ATCC 11170 / ATH 1.1.1 / DSM 467 / LMG 4362 / NCIMB 8255 / S1).